The chain runs to 171 residues: Probable chorismate pyruvate-lyase (171 aa).

Substrate is bound by residues Met36, Arg78, Leu116, and Glu157.

This sequence belongs to the UbiC family.

It localises to the cytoplasm. It catalyses the reaction chorismate = 4-hydroxybenzoate + pyruvate. Its pathway is cofactor biosynthesis; ubiquinone biosynthesis. Removes the pyruvyl group from chorismate, with concomitant aromatization of the ring, to provide 4-hydroxybenzoate (4HB) for the ubiquinone pathway. In Bartonella henselae (strain ATCC 49882 / DSM 28221 / CCUG 30454 / Houston 1) (Rochalimaea henselae), this protein is Probable chorismate pyruvate-lyase.